Here is a 493-residue protein sequence, read N- to C-terminus: Stage V sporulation protein AF (493 aa).

The next 5 membrane-spanning stretches (helical) occupy residues 296 to 316 (FFGI…VLQP), 334 to 354 (IPII…RMAA), 363 to 383 (TAMG…VGLF), 387 to 407 (VILY…YELS), and 418 to 438 (MILV…VLII).

The protein belongs to the GerABKA family.

The protein resides in the cell membrane. In Bacillus subtilis (strain 168), this protein is Stage V sporulation protein AF (spoVAF).